The primary structure comprises 211 residues: Probable endopeptidase cgR_2070 (211 aa).

An N-terminal signal peptide occupies residues 1 to 35; it reads MGKHRRNNSNATRKAVAASAVALGATAAIASPAQA. Residues 97–211 enclose the NlpC/P60 domain; it reads ASTGQAIVDA…YMPFHSAVRF (115 aa). Cys127 acts as the Nucleophile in catalysis. His175 (proton acceptor) is an active-site residue. His187 is an active-site residue.

It belongs to the peptidase C40 family.

Its subcellular location is the secreted. The chain is Probable endopeptidase cgR_2070 from Corynebacterium glutamicum (strain R).